Consider the following 249-residue polypeptide: tRNA pseudouridine synthase A (249 aa).

Aspartate 52 (nucleophile) is an active-site residue. Tyrosine 111 serves as a coordination point for substrate.

It belongs to the tRNA pseudouridine synthase TruA family. In terms of assembly, homodimer.

It catalyses the reaction uridine(38/39/40) in tRNA = pseudouridine(38/39/40) in tRNA. Its function is as follows. Formation of pseudouridine at positions 38, 39 and 40 in the anticodon stem and loop of transfer RNAs. This Maricaulis maris (strain MCS10) (Caulobacter maris) protein is tRNA pseudouridine synthase A.